Consider the following 269-residue polypeptide: 3-ketodihydrosphingosine reductase (269 aa).

The NADPH site is built by Gly-10, Ser-12, Ser-13, Gly-14, Lys-36, and Asp-50. Positions 10 to 14 match the GXSXG motif; that stretch reads GASSG. Ser-12 functions as the Nucleophile; for lipase activity in the catalytic mechanism. The active-site Proton donor is the Ser-128. The active-site Proton acceptor is Tyr-142. Residues Tyr-142 and Lys-146 each contribute to the NADP(+) site. NADPH is bound by residues 142–146 and 175–177; these read YSASK and FNT. Lys-146 is a catalytic residue. The active-site Lowers pKa of active site Tyr is Lys-146.

Belongs to the short-chain dehydrogenases/reductases (SDR) family.

The catalysed reaction is sphinganine + NADP(+) = 3-oxosphinganine + NADPH + H(+). It participates in lipid metabolism; sphingolipid metabolism. Its function is as follows. Catalyzes the reduction of 3'-oxosphinganine (3-ketodihydrosphingosine/KDS) to sphinganine (dihydrosphingosine/DHS), the second step of de novo sphingolipid biosynthesis. This Bacteroides thetaiotaomicron (strain ATCC 29148 / DSM 2079 / JCM 5827 / CCUG 10774 / NCTC 10582 / VPI-5482 / E50) protein is 3-ketodihydrosphingosine reductase.